The following is a 769-amino-acid chain: Subtilisin-like protease 3 (769 aa).

N-linked (GlcNAc...) asparagine glycans are attached at residues Asn-68, Asn-102, Asn-108, Asn-295, Asn-316, and Asn-356. Residues 293–302 show a composition bias toward basic residues; it reads KINHSNKHKN. The tract at residues 293-329 is disordered; that stretch reads KINHSNKHKNNNNNNNNNDYHNNNKSNYHSHSSAKCQ. Over residues 303–325 the composition is skewed to low complexity; the sequence is NNNNNNNNDYHNNNKSNYHSHSS. Residues 345–756 enclose the Peptidase S8 domain; it reads GYDIIQMEEG…GGFINVYDLV (412 aa). The active-site Charge relay system is Asp-372. A disordered region spans residues 468–493; that stretch reads NIKSSDNIKSSDNINSSDNIKSSDNN. N-linked (GlcNAc...) asparagine glycans are attached at residues Asn-482 and Asn-515. His-523 serves as the catalytic Charge relay system. Asn-584 and Asn-616 each carry an N-linked (GlcNAc...) asparagine glycan. The active-site Charge relay system is Ser-701. Asn-720 carries an N-linked (GlcNAc...) asparagine glycan.

The protein belongs to the peptidase S8 family.

The protein resides in the secreted. The enzyme catalyses Hydrolysis of proteins with broad specificity for peptide bonds, and a preference for a large uncharged residue in P1. Hydrolyzes peptide amides.. Its function is as follows. Serine protease which may cleave PFN/profilin. The chain is Subtilisin-like protease 3 from Plasmodium falciparum (isolate 3D7).